The following is a 292-amino-acid chain: Elongation factor Ts (292 aa).

The interval 82–85 is involved in Mg(2+) ion dislocation from EF-Tu; sequence TDFV.

It belongs to the EF-Ts family.

It localises to the cytoplasm. Associates with the EF-Tu.GDP complex and induces the exchange of GDP to GTP. It remains bound to the aminoacyl-tRNA.EF-Tu.GTP complex up to the GTP hydrolysis stage on the ribosome. The chain is Elongation factor Ts from Legionella pneumophila (strain Paris).